The chain runs to 526 residues: Delayed-rectifier potassium channel regulatory subunit KCNS1 (526 aa).

The Cytoplasmic segment spans residues 1 to 217; that stretch reads MLMLLVRGTH…LTMENPGYSL (217 aa). The chain crosses the membrane as a helical span at residues 218-239; it reads PSKLFSCVSISVVLASIAAMCI. Residues 240-270 lie on the Extracellular side of the membrane; the sequence is HSLPEYQAREAAAAVAAVAAGRSPEGVRDDP. Residues 271 to 293 form a helical membrane-spanning segment; it reads VLRRLEYFCIAWFSFEVSSRLLL. At 294 to 304 the chain is on the cytoplasmic side; the sequence is APSTRNFFCHP. The chain crosses the membrane as a helical span at residues 305–322; sequence LNLIDIVSVLPFYLTLLA. At 323-337 the chain is on the extracellular side; sequence GVALGDQGGKEFGHL. Residues 338–358 form a helical; Voltage-sensor membrane-spanning segment; that stretch reads GKVVQVFRLMRIFRVLKLARH. The Cytoplasmic portion of the chain corresponds to 359–373; the sequence is STGLRSLGATLKHSY. A helical membrane pass occupies residues 374–395; it reads REVGILLLYLAVGVSVFSGVAY. The Extracellular portion of the chain corresponds to 396 to 408; it reads TAEKEEDVGFNTI. The helical intramembrane region spans 409-420; sequence PACWWWGTVSMT. The short motif at 421-426 is the Selectivity filter element; sequence TVGYGD. The stretch at 421 to 428 is an intramembrane region; sequence TVGYGDVV. At 429 to 435 the chain is on the extracellular side; the sequence is PVTVAGK. The chain crosses the membrane as a helical span at residues 436 to 464; it reads LAASGCILGGILVVALPITIIFNKFSHFY. Topologically, residues 465-526 are cytoplasmic; the sequence is RRQKALEAAV…PSEPPHPQRY (62 aa). Residues 492–526 are disordered; that stretch reads VSEASLETSGETSQEGRSADLESQAPSEPPHPQRY. The span at 496-507 shows a compositional bias: polar residues; that stretch reads SLETSGETSQEG.

This sequence belongs to the potassium channel family. S (TC 1.A.1.2) subfamily. Kv9.1/KCNS1 sub-subfamily. In terms of assembly, heterotetramer with KCNB1. Heterotetramer with KCNB2. Does not form homomultimers.

It is found in the cell membrane. Functionally, potassium channel regulatory subunit that modulate the delayed rectifier voltage-gated potassium channel activity of KCNB1 and KCNB2 by altering their kinetics, expression levels, and shifting the half-inactivation potential to more polarized values. While it does not form functional channels on its own, it can form functional heterotetrameric channels with KCNB1 and KCNB2. Each regulatory subunit has unique regulatory properties that can lead to extensive inhibition, significant changes in kinetics, and/or substantial shifts in the voltage dependencies of the inactivation process. This Gorilla gorilla gorilla (Western lowland gorilla) protein is Delayed-rectifier potassium channel regulatory subunit KCNS1.